The sequence spans 647 residues: 5-aminolevulinate synthase, non-specific, mitochondrial (647 aa).

The N-terminal 56 residues, 1 to 56 (METVVRRCPFLSRVPQAFLQKAGKSLLFYAQNCPKMMEIGAKPAPRALSTSAVLCQ), are a transit peptide targeting the mitochondrion. The tract at residues 61-112 (TPPANEKDKAAKAEVQQAPDGSQQAPDGSQQTADGTQLPSGHPSLASSQGTG) is disordered. The segment covering 79–112 (PDGSQQAPDGSQQTADGTQLPSGHPSLASSQGTG) has biased composition (polar residues). The substrate site is built by Arg-224, Ser-341, and Lys-360. Ser-393, His-421, and Thr-449 together coordinate pyridoxal 5'-phosphate. Lys-452 is a catalytic residue. An N6-(pyridoxal phosphate)lysine modification is found at Lys-452. The pyridoxal 5'-phosphate site is built by Thr-481 and Thr-482. Substrate is bound at residue Thr-569. Position 583 is a hydroxyproline (Pro-583).

It belongs to the class-II pyridoxal-phosphate-dependent aminotransferase family. As to quaternary structure, homodimer. Interacts (hydroxylated form) with VHL. Pyridoxal 5'-phosphate is required as a cofactor. In terms of processing, in normoxia, is hydroxylated at Pro-583, promoting interaction with VHL, initiating ubiquitination and subsequent degradation via the proteasome. Post-translationally, ubiquitinated; in normoxia following hydroxylation and interaction with VHL, leading to its subsequent degradation via the proteasome.

It localises to the mitochondrion inner membrane. It carries out the reaction succinyl-CoA + glycine + H(+) = 5-aminolevulinate + CO2 + CoA. It functions in the pathway porphyrin-containing compound metabolism; protoporphyrin-IX biosynthesis; 5-aminolevulinate from glycine: step 1/1. Its function is as follows. Catalyzes the pyridoxal 5'-phosphate (PLP)-dependent condensation of succinyl-CoA and glycine to form aminolevulinic acid (ALA), with CoA and CO2 as by-products. This chain is 5-aminolevulinate synthase, non-specific, mitochondrial (ALAS1), found in Bos taurus (Bovine).